Consider the following 354-residue polypeptide: Lysine racemase (354 aa).

N6-(pyridoxal phosphate)lysine is present on K36.

It belongs to the alanine racemase family. Homodimer. The cofactor is pyridoxal 5'-phosphate.

The catalysed reaction is L-lysine = D-lysine. It carries out the reaction L-ornithine = D-ornithine. Its pathway is cell wall biogenesis; peptidoglycan biosynthesis. In terms of biological role, catalyzes the interconversion of D-lysine and L-lysine. Has also high activity toward ornithine, and weaker activity toward alanine. Contributes to production of D-lysine and D-alanine for use as peptidoglycan components. The protein is Lysine racemase of Thermotoga maritima (strain ATCC 43589 / DSM 3109 / JCM 10099 / NBRC 100826 / MSB8).